The primary structure comprises 160 residues: MCPSGRIAIPITTTANPNFRPAFEIIDTDHDGKISSDDLRAFYAGIPSGENNDETMIGTMISVADANKDGFVEFDEFEKVLETTPFSRSGNGGDDGLMKDVFKVMDKDGDGRLSYGDLKSYMDSAGLAVTDDEIKSMIRLAGGDLNDGVSFDGLLKIFGC.

EF-hand domains follow at residues 22-49 (AFEIIDTDHDGKISSDDLRAFYAGIPSG), 52-87 (NDETMIGTMISVADANKDGFVEFDEFEKVLETTPFS), and 93-128 (GDDGLMKDVFKVMDKDGDGRLSYGDLKSYMDSAGLA). Asp-27, Asp-29, Asp-31, Lys-33, Asp-38, Asp-65, Asn-67, Asp-69, Glu-76, Asp-106, Asp-108, Asp-110, Arg-112, and Asp-117 together coordinate Ca(2+).

In terms of tissue distribution, expressed in roots and flowers.

The protein localises to the cytoplasm. Its subcellular location is the cytosol. Binds calcium in vitro. This Arabidopsis thaliana (Mouse-ear cress) protein is Calcium-binding protein CP1.